We begin with the raw amino-acid sequence, 77 residues long: Translation initiation factor IF-1, chloroplastic (77 aa).

An S1-like domain is found at 1–71; it reads MKEQKLIHEG…TKGRIIYRLR (71 aa).

It belongs to the IF-1 family. Component of the 30S ribosomal translation pre-initiation complex which assembles on the 30S ribosome in the order IF-2 and IF-3, IF-1 and N-formylmethionyl-tRNA(fMet); mRNA recruitment can occur at any time during PIC assembly.

It is found in the plastid. Its subcellular location is the chloroplast. Its function is as follows. One of the essential components for the initiation of protein synthesis. Stabilizes the binding of IF-2 and IF-3 on the 30S subunit to which N-formylmethionyl-tRNA(fMet) subsequently binds. Helps modulate mRNA selection, yielding the 30S pre-initiation complex (PIC). Upon addition of the 50S ribosomal subunit IF-1, IF-2 and IF-3 are released leaving the mature 70S translation initiation complex. The polypeptide is Translation initiation factor IF-1, chloroplastic (Dioscorea elephantipes (Elephant's foot yam)).